Consider the following 150-residue polypeptide: MKIIFVFALLAIAACSASAQFDVLGQSYRQYQLQSPVLLQQQVLSPYNEFVRQQYGIAASPFLQSAAFQLRNNQVWQQLALVAQQSHYQDINIVQAIAQQLQLQQFGDLYFDRNLAQAQALLAFNVPSRYGIYPRYYGAPSTITTLGGVL.

The signal sequence occupies residues 1–19 (MKIIFVFALLAIAACSASA). Gln-20 bears the Pyrrolidone carboxylic acid mark.

It belongs to the prolamin family.

It localises to the vacuole. It is found in the aleurone grain. Functionally, seed storage protein; serves as a source of nitrogen, carbon and sulfur for the young developing seedling. This is Prolamin PPROL 14E from Oryza sativa subsp. indica (Rice).